The primary structure comprises 116 residues: Iron-sulfur cluster insertion protein ErpA (116 aa).

Iron-sulfur cluster is bound by residues C44, C108, and C110.

Belongs to the HesB/IscA family. In terms of assembly, homodimer. The cofactor is iron-sulfur cluster.

In terms of biological role, required for insertion of 4Fe-4S clusters for at least IspG. The protein is Iron-sulfur cluster insertion protein ErpA of Pseudomonas syringae pv. syringae (strain B728a).